The following is a 187-amino-acid chain: MTTAQKVQPRLKERYRSEIRDALRKQFGYGNVMQIPTVTKVVVNMGVGEAARDAKLINGAVNDLALITGQKPEVRRARKSIAQFKLREGMPVGVRVTLRGDRMWEFLDRLTSIALPRIRDFRGLSPKQFDGVGNYTFGLAEQAVFHEVDVDKIDRVRGMDINVVTSAATDDEGRALLRALGFPFKEN.

It belongs to the universal ribosomal protein uL5 family. Part of the 50S ribosomal subunit; part of the 5S rRNA/L5/L18/L25 subcomplex. Contacts the 5S rRNA and the P site tRNA. Forms a bridge to the 30S subunit in the 70S ribosome.

Its function is as follows. This is one of the proteins that bind and probably mediate the attachment of the 5S RNA into the large ribosomal subunit, where it forms part of the central protuberance. In the 70S ribosome it contacts protein S13 of the 30S subunit (bridge B1b), connecting the 2 subunits; this bridge is implicated in subunit movement. Contacts the P site tRNA; the 5S rRNA and some of its associated proteins might help stabilize positioning of ribosome-bound tRNAs. The polypeptide is Large ribosomal subunit protein uL5 (Mycobacterium bovis (strain ATCC BAA-935 / AF2122/97)).